The following is a 411-amino-acid chain: Arginine deiminase (411 aa).

The active-site Amidino-cysteine intermediate is cysteine 399.

The protein belongs to the arginine deiminase family.

It localises to the cytoplasm. It catalyses the reaction L-arginine + H2O = L-citrulline + NH4(+). The protein operates within amino-acid degradation; L-arginine degradation via ADI pathway; carbamoyl phosphate from L-arginine: step 1/2. In Latilactobacillus sakei subsp. sakei (strain 23K) (Lactobacillus sakei subsp. sakei), this protein is Arginine deiminase.